The primary structure comprises 71 residues: DNA-directed RNA polymerase subunit 10-like protein (71 aa).

Residues C7, C10, C44, and C45 each contribute to the Zn(2+) site.

The protein belongs to the archaeal Rpo10/eukaryotic RPB10 RNA polymerase subunit family. In terms of assembly, interacts with IYO.

Its subcellular location is the nucleus. In Arabidopsis thaliana (Mouse-ear cress), this protein is DNA-directed RNA polymerase subunit 10-like protein.